The following is a 401-amino-acid chain: Glutamyl-tRNA reductase (401 aa).

Substrate-binding positions include 45–48 (TCNR), serine 101, 106–108 (EDQ), and glutamine 112. Cysteine 46 functions as the Nucleophile in the catalytic mechanism. 177-182 (GYGDVG) lines the NADP(+) pocket.

This sequence belongs to the glutamyl-tRNA reductase family. As to quaternary structure, homodimer.

It carries out the reaction (S)-4-amino-5-oxopentanoate + tRNA(Glu) + NADP(+) = L-glutamyl-tRNA(Glu) + NADPH + H(+). It functions in the pathway porphyrin-containing compound metabolism; protoporphyrin-IX biosynthesis; 5-aminolevulinate from L-glutamyl-tRNA(Glu): step 1/2. In terms of biological role, catalyzes the NADPH-dependent reduction of glutamyl-tRNA(Glu) to glutamate 1-semialdehyde (GSA). The chain is Glutamyl-tRNA reductase from Clostridium botulinum (strain Eklund 17B / Type B).